The chain runs to 382 residues: F-box/LRR-repeat/kelch-repeat protein At1g09650 (382 aa).

An F-box domain is found at 7 to 52 (CLMMESLPHEVVECILERLDADPLLRFKAVSKQWKSTIESPFFQRR). The LRR 1 repeat unit spans residues 78–101 (IEALTTLVLGSSSSVKIPTPWEEE). A Kelch 1 repeat occupies 180 to 227 (PVWLYNSIEIGLENATTCEVFDFSTNAWRYVSPAAPYRIVGCPAPVCV). The LRR 2 repeat unit spans residues 239-262 (ETKILSFDLHTETFQVVSKAPFAN). The stretch at 270 to 319 (MCNLDNRLCVSEMKLPNQVIWSFNSGNKTWHKMCSINLDITSRWFGPTQV) is one Kelch 2 repeat.

In Arabidopsis thaliana (Mouse-ear cress), this protein is F-box/LRR-repeat/kelch-repeat protein At1g09650.